Here is a 453-residue protein sequence, read N- to C-terminus: uncharacterized protein (453 aa).

Cys-74, Cys-80, Cys-83, and Cys-162 together coordinate [4Fe-4S] cluster. Gln-286, Tyr-315, Glu-336, and Asp-384 together coordinate S-adenosyl-L-methionine. Cys-411 serves as the catalytic Nucleophile.

The protein belongs to the class I-like SAM-binding methyltransferase superfamily. RNA M5U methyltransferase family.

This is an uncharacterized protein from Staphylococcus aureus (strain MW2).